The primary structure comprises 90 residues: MGGASIWHWIVVGVIVMLLFGRGKVSELMGDVAKGIKAFKKGMADEDQPQAPVANQSPPPVSATEPVRTLPPHQGEPAPAANASVDRKVG.

A helical transmembrane segment spans residues 1–21 (MGGASIWHWIVVGVIVMLLFG). Residues 42–90 (GMADEDQPQAPVANQSPPPVSATEPVRTLPPHQGEPAPAANASVDRKVG) are disordered.

This sequence belongs to the TatA/E family. The Tat system comprises two distinct complexes: a TatABC complex, containing multiple copies of TatA, TatB and TatC subunits, and a separate TatA complex, containing only TatA subunits. Substrates initially bind to the TatABC complex, which probably triggers association of the separate TatA complex to form the active translocon.

Its subcellular location is the cell inner membrane. Part of the twin-arginine translocation (Tat) system that transports large folded proteins containing a characteristic twin-arginine motif in their signal peptide across membranes. TatA could form the protein-conducting channel of the Tat system. This is Sec-independent protein translocase protein TatA from Methylobacterium nodulans (strain LMG 21967 / CNCM I-2342 / ORS 2060).